The following is a 262-amino-acid chain: Expansin-A13 (262 aa).

The N-terminal stretch at 1–22 is a signal peptide; that stretch reads MAGVARMLAAVVCAIMPAAAMA. Residues 52 to 167 enclose the Expansin-like EG45 domain; sequence GGACGYGNLY…QRVPCMKKGG (116 aa). In terms of domain architecture, Expansin-like CBD spans 177-257; the sequence is YFQLVLLTNV…GWRFGQTFAS (81 aa).

Belongs to the expansin family. Expansin A subfamily. Expressed in roots and flowers.

The protein localises to the secreted. It is found in the cell wall. It localises to the membrane. Its function is as follows. May cause loosening and extension of plant cell walls by disrupting non-covalent bonding between cellulose microfibrils and matrix glucans. No enzymatic activity has been found. May be required for rapid internodal elongation in deepwater rice during submergence. This Oryza sativa subsp. japonica (Rice) protein is Expansin-A13 (EXPA13).